Here is a 106-residue protein sequence, read N- to C-terminus: UPF0091 protein RC0354 (106 aa).

Belongs to the UPF0091 family.

The chain is UPF0091 protein RC0354 from Rickettsia conorii (strain ATCC VR-613 / Malish 7).